Reading from the N-terminus, the 179-residue chain is Large ribosomal subunit protein uL6 (179 aa).

The protein belongs to the universal ribosomal protein uL6 family. Part of the 50S ribosomal subunit.

Functionally, this protein binds to the 23S rRNA, and is important in its secondary structure. It is located near the subunit interface in the base of the L7/L12 stalk, and near the tRNA binding site of the peptidyltransferase center. The polypeptide is Large ribosomal subunit protein uL6 (Acidobacterium capsulatum (strain ATCC 51196 / DSM 11244 / BCRC 80197 / JCM 7670 / NBRC 15755 / NCIMB 13165 / 161)).